The sequence spans 337 residues: Putative 4-hydroxythreonine-4-phosphate dehydrogenase (337 aa).

Residues histidine 172, histidine 216, and histidine 271 each coordinate a divalent metal cation.

The protein belongs to the PdxA family. As to quaternary structure, homodimer. Zn(2+) is required as a cofactor. Requires Mg(2+) as cofactor. It depends on Co(2+) as a cofactor.

The protein resides in the cytoplasm. It carries out the reaction 4-(phosphooxy)-L-threonine + NAD(+) = 3-amino-2-oxopropyl phosphate + CO2 + NADH. It participates in cofactor biosynthesis; pyridoxine 5'-phosphate biosynthesis; pyridoxine 5'-phosphate from D-erythrose 4-phosphate: step 4/5. Its function is as follows. Catalyzes the NAD(P)-dependent oxidation of 4-(phosphooxy)-L-threonine (HTP) into 2-amino-3-oxo-4-(phosphooxy)butyric acid which spontaneously decarboxylates to form 3-amino-2-oxopropyl phosphate (AHAP). The protein is Putative 4-hydroxythreonine-4-phosphate dehydrogenase of Pasteurella multocida (strain Pm70).